Reading from the N-terminus, the 128-residue chain is Sulfurtransferase TusD (128 aa).

The active-site Cysteine persulfide intermediate is C78.

The protein belongs to the DsrE/TusD family. Heterohexamer, formed by a dimer of trimers. The hexameric TusBCD complex contains 2 copies each of TusB, TusC and TusD. The TusBCD complex interacts with TusE.

Its subcellular location is the cytoplasm. Part of a sulfur-relay system required for 2-thiolation of 5-methylaminomethyl-2-thiouridine (mnm(5)s(2)U) at tRNA wobble positions. Accepts sulfur from TusA and transfers it in turn to TusE. The protein is Sulfurtransferase TusD of Citrobacter koseri (strain ATCC BAA-895 / CDC 4225-83 / SGSC4696).